The chain runs to 197 residues: Guanylate kinase (197 aa).

The 186-residue stretch at 6-191 (SKLIILSGPS…CVAQIEKIIS (186 aa)) folds into the Guanylate kinase-like domain. 13 to 20 (GPSGVGKG) lines the ATP pocket.

The protein belongs to the guanylate kinase family.

It localises to the cytoplasm. The catalysed reaction is GMP + ATP = GDP + ADP. Essential for recycling GMP and indirectly, cGMP. This chain is Guanylate kinase, found in Mesomycoplasma hyopneumoniae (strain 7448) (Mycoplasma hyopneumoniae).